We begin with the raw amino-acid sequence, 1078 residues long: Extracellular calcium-sensing receptor (1078 aa).

Residues 1–19 (MAFYSCCWVLLALTWHTSA) form the signal peptide. Residues 20–610 (YGPDQRAQKK…KEIEFLSWTE (591 aa)) lie on the Extracellular side of the membrane. The tract at residues 22-188 (PDQRAQKKGD…QFKSFLRTIP (167 aa)) is ligand-binding 1 (LB1). An intrachain disulfide couples cysteine 60 to cysteine 101. 66-70 (RGFRW) lines the phosphate pocket. Isoleucine 81, serine 84, leucine 87, and leucine 88 together coordinate Ca(2+). A glycan (N-linked (GlcNAc...) asparagine) is linked at asparagine 90. Residue threonine 100 participates in Ca(2+) binding. Asparagine 130 is a glycosylation site (N-linked (GlcNAc...) asparagine). Ca(2+) is bound at residue threonine 145. L-tryptophan-binding residues include serine 147, alanine 168, and serine 170. Ca(2+)-binding residues include serine 170, proline 188, aspartate 190, glutamate 231, and aspartate 234. The tract at residues 189–324 (NDEHQATAMA…GGTIGFALKA (136 aa)) is ligand-binding 2 (LB2). Intrachain disulfides connect cysteine 236/cysteine 561, cysteine 358/cysteine 395, cysteine 437/cysteine 449, cysteine 542/cysteine 562, cysteine 546/cysteine 565, cysteine 568/cysteine 582, and cysteine 585/cysteine 598. Spermine is bound by residues aspartate 238 and serine 240. 2 N-linked (GlcNAc...) asparagine glycosylation sites follow: asparagine 261 and asparagine 287. A Ca(2+)-binding site is contributed by glutamate 297. Glutamate 297 contributes to the L-tryptophan binding site. 2 N-linked (GlcNAc...) asparagine glycosylation sites follow: asparagine 386 and asparagine 400. 415-417 (RIS) contacts phosphate. Asparagine 446, asparagine 468, and asparagine 488 each carry an N-linked (GlcNAc...) asparagine glycan. Tyrosine 489 lines the Ca(2+) pocket. N-linked (GlcNAc...) asparagine glycosylation is present at asparagine 541. The segment at 542–612 (CSRDCLAGTR…IEFLSWTEPF (71 aa)) is cysteine-rich (CR). Glycine 557 lines the Ca(2+) pocket. Asparagine 594 carries N-linked (GlcNAc...) asparagine glycosylation. A helical membrane pass occupies residues 611–636 (PFGIALTLFAVLGIFLTAFVLGVFIK). The Cytoplasmic segment spans residues 637 to 648 (FRNTPIVKATNR). The segment at 637-648 (FRNTPIVKATNR) is intracellular loop 1 (ICL1). The helical transmembrane segment at 649 to 668 (ELSYLLLFSLLCCFSSSLFF) threads the bilayer. The Extracellular portion of the chain corresponds to 669–674 (IGEPQD). A helical membrane pass occupies residues 675-698 (WTCRLRQPAFGISFVLCISCILVK). Residues 699–722 (TNRVLLVFEAKIPTSFHRKWWGLN) are Cytoplasmic-facing. Positions 699–722 (TNRVLLVFEAKIPTSFHRKWWGLN) are intracellular loop 2 (ICL2). Residues 723–745 (LQFLLVFLCTFMQIVICVIWLYT) traverse the membrane as a helical segment. The Extracellular portion of the chain corresponds to 746-769 (APPSSYRNQELEDEIIFITCHEGS). Residues 770–789 (LMALGFLIGYTCLLAAICFF) form a helical membrane-spanning segment. Residues 790–805 (FAFKSRKLPENFNEAK) lie on the Cytoplasmic side of the membrane. The intracellular loop 3 (ICL3) stretch occupies residues 790–805 (FAFKSRKLPENFNEAK). A helical membrane pass occupies residues 806 to 828 (FITFSMLIFFIVWISFIPAYAST). Topologically, residues 829–832 (YGKF) are extracellular. Residues 833–854 (VSAVEVIAILAASFGLLACIFF) form a helical membrane-spanning segment. Topologically, residues 855–1078 (NKIYIILFKP…STVTENVVNS (224 aa)) are cytoplasmic. The segment at 855–1078 (NKIYIILFKP…STVTENVVNS (224 aa)) is C-terminus. Positions 880–900 (AFKVAARATLRRSNVSRKRSS) are interaction with RNF19A. Threonine 888 carries the phosphothreonine; by PKC modification. The arginine-rich retention motif stretch occupies residues 890-898 (RRSNVSRKR). A Phosphoserine; by PKC modification is found at serine 892. Disordered regions lie at residues 892-963 (SNVS…PRCK), 986-1006 (AMAH…SSDT), and 1030-1055 (TGLQ…PALV). Serine 899 carries the phosphoserine; by PKA modification. Over residues 900–918 (SSLGGSTGSTPSSSISSKS) the composition is skewed to low complexity. Serine 920 carries the post-translational modification Phosphoserine. The span at 932 to 960 (QQQPLALTQQEQQQQPLTLPQQQRSQQQP) shows a compositional bias: low complexity. A compositionally biased stretch (polar residues) spans 993–1006 (THQNSLEAQKSSDT). The residue at position 1061 (serine 1061) is a Phosphoserine.

Belongs to the G-protein coupled receptor 3 family. In terms of assembly, homodimer; disulfide-linked. Interacts with VCP. Interacts with ARRB1. Post-translationally, phosphorylation at Thr-888 by PKC impairs coupling with G(q)/G(11) G-proteins, while it does not affect G(i)/G(o)-coupling. Phosphorylation at Ser-892 by PKC and Ser-899 by PKA promote plasma membrane localization. In terms of processing, ubiquitinated by RNF19A; which induces proteasomal degradation. N-glycosylated. In terms of tissue distribution, expressed in the temporal lobe, frontal lobe, parietal lobe, hippocampus, and cerebellum. Also found in kidney, lung, liver, heart, skeletal muscle, placenta.

Its subcellular location is the cell membrane. In resting state, adopts an open conformation, anion-binding promoting the inactive configuration. Upon aromatic amino acid-binding, the groove in the extracellular venus flytrap module is closed, thereby inducing the formation of a novel homodimer interface between subunits. Calcium ions stabilize the active state by enhancing homodimer interactions between membrane-proximal domains to fully activate the receptor. Upon activation, the homodimer adopts an asymmetric configuration of the 7-transmembrane region that primes one protomer for G-protein coupling. G-protein binding expands the transmembrane dimer interface; the restriction imposed by the receptor dimer, in combination with intracellular loop 2 (ICL2), enables G-protein activation by facilitating conformational transition of G-protein alpha. Coupling to different classes of G-proteins results in distinct CASR-G-protein interfaces. Activated by glucose, which acts as a positive allosteric modulator. Activated by positive allosteric modulator drugs cinacalcet, evocalcet and etelcalcetide, which are clinically used for the treatment of hyperparathyroidism and familial hypocalciuric hypercalcemia. Inhibited by NPS-2143, a negative allosteric modulator tested for the treatment of hypocalcemia. Activated by velcalcetide (AMG 416), a D-amino acid-containing peptide agonist that is being evaluated for the treatment of secondary hyperparathyroidism in chronic kidney disease patients receiving hemodialysis. Velcalcetide agonist acts by forming a disulfide bond with Cys-482. G-protein-coupled receptor that senses changes in the extracellular concentration of calcium ions and plays a key role in maintaining calcium homeostasis. Senses fluctuations in the circulating calcium concentration: activated by elevated circulating calcium, leading to decreased parathyroid hormone (PTH) secretion in parathyroid glands. In kidneys, acts as a key regulator of renal tubular calcium resorption. Ligand binding causes a conformation change that triggers signaling via guanine nucleotide-binding proteins (G-proteins) and modulates the activity of downstream effectors. CASR is coupled with different G(q)/G(11), G(i)/G(o)- or G(s)-classes of G-proteins depending on the context. In the parathyroid and kidney, CASR signals through G(q)/G(11) and G(i)/G(o) G-proteins: G(q)/G(11) coupling activates phospholipase C-beta, releasing diacylglycerol (DAG) and inositol 1,4,5-trisphosphate (IP3) second messengers, while G(i)/G(o) coupling mediates inhibition of adenylate cyclase activity. The G-protein-coupled receptor activity is activated by a co-agonist mechanism: aromatic amino acids, such as Trp or Phe, act concertedly with divalent cations, such as calcium or magnesium, to achieve full receptor activation. Acts as an activator of the NLRP3 inflammasome via G(i)/G(o)-mediated signaling: down-regulation of cyclic AMP (cAMP) relieving NLRP3 inhibition by cAMP. Acts as a regulator of proton-sensing receptor GPR68 in a seesaw manner: CASR-mediated signaling inhibits GPR68 signaling in response to extracellular calcium, while GPR68 inhibits CASR in presence of extracellular protons. The polypeptide is Extracellular calcium-sensing receptor (Homo sapiens (Human)).